Here is a 60-residue protein sequence, read N- to C-terminus: UPF0509 protein Ent638_2183 (60 aa).

The protein belongs to the UPF0509 family.

The sequence is that of UPF0509 protein Ent638_2183 from Enterobacter sp. (strain 638).